Here is a 300-residue protein sequence, read N- to C-terminus: Porphobilinogen deaminase (300 aa).

At Cys-239 the chain carries S-(dipyrrolylmethanemethyl)cysteine.

Belongs to the HMBS family. Monomer. Dipyrromethane serves as cofactor.

The enzyme catalyses 4 porphobilinogen + H2O = hydroxymethylbilane + 4 NH4(+). Its pathway is porphyrin-containing compound metabolism; protoporphyrin-IX biosynthesis; coproporphyrinogen-III from 5-aminolevulinate: step 2/4. Its function is as follows. Tetrapolymerization of the monopyrrole PBG into the hydroxymethylbilane pre-uroporphyrinogen in several discrete steps. This is Porphobilinogen deaminase from Francisella tularensis subsp. tularensis (strain WY96-3418).